A 221-amino-acid chain; its full sequence is Sugar transporter SWEET1 (221 aa).

The next 7 membrane-spanning stretches (helical) occupy residues 3-23 (AGGF…LGMF), 42-62 (VQFL…SYGA), 68-88 (ILIV…LAYL), 96-116 (VVLL…GYFW), 126-146 (LQLL…SPLA), 160-180 (LSYP…LYGF), and 186-206 (YIMV…WLFW). The MtN3/slv 1 domain maps to 10–94 (LIYGACVVFT…LAYLHYCPRK (85 aa)). The MtN3/slv 2 domain occupies 127–212 (QLLGLFCSVF…WLFWKYPQEQ (86 aa)). Residues 149–221 (AKVIQTKSTQ…QDRNYWFLQT (73 aa)) are mediates interaction with TRPV2.

Belongs to the SWEET sugar transporter family. In terms of assembly, interacts with TRPV2; the interaction probably occurs intracellularly and depends on TRPV2 N-glycosylation.

Its subcellular location is the golgi apparatus membrane. The protein resides in the cell membrane. Functionally, mediates sugar transport across membranes. May stimulate V(D)J recombination by the activation of RAG1. The protein is Sugar transporter SWEET1 (SLC50A1) of Papio anubis (Olive baboon).